A 156-amino-acid polypeptide reads, in one-letter code: Peptide deformylase 1 (156 aa).

2 residues coordinate Fe cation: Cys-90 and His-132. Glu-133 is an active-site residue. A Fe cation-binding site is contributed by His-136.

The protein belongs to the polypeptide deformylase family. It depends on Fe(2+) as a cofactor.

The catalysed reaction is N-terminal N-formyl-L-methionyl-[peptide] + H2O = N-terminal L-methionyl-[peptide] + formate. Removes the formyl group from the N-terminal Met of newly synthesized proteins. Requires at least a dipeptide for an efficient rate of reaction. N-terminal L-methionine is a prerequisite for activity but the enzyme has broad specificity at other positions. The chain is Peptide deformylase 1 from Bacillus anthracis.